Consider the following 689-residue polypeptide: Glycine--tRNA ligase beta subunit (689 aa).

This sequence belongs to the class-II aminoacyl-tRNA synthetase family. Tetramer of two alpha and two beta subunits.

It is found in the cytoplasm. It catalyses the reaction tRNA(Gly) + glycine + ATP = glycyl-tRNA(Gly) + AMP + diphosphate. The polypeptide is Glycine--tRNA ligase beta subunit (Shigella boydii serotype 4 (strain Sb227)).